Consider the following 407-residue polypeptide: MKYDNLLDRFIKYVKVNTRSDPDSETTPSTESQEAFALTILKPEMEAIGLQDVHYNPVNGYLIGTLPANNPTLTRKIGFIAHMDTADFNAENVNPQIIDNYQGGDITLGSSNYKLDPKAFPNLNNYIGQTLITTDGTTLLGADDKSGIAEIMTAIEFLTSQPQIEHCDIKVAFGPDEEIGVGADKFEVADFEVDFAYTMDGGPLGELQYETFSAAALEVTFLGRNVHPGTAKDQMINALELAIDFHEKLPAKERPEYTDGYQGFYHLTGLTGTVEEARASYIIRDFEEASFEARKVKVENIAQSMNAQLGTKRVLVELNDQYYNMKKVIEKDMTAIELAKEVMEELAIKPVIEPIRGGTDGSKISFMGIPTPNIFAGGENMHGRFEFVSLQTMERAVDVIIGLVCKA.

Residue His82 participates in Zn(2+) binding. Residue Asp84 is part of the active site. A Zn(2+)-binding site is contributed by Asp143. The Proton acceptor role is filled by Glu177. Zn(2+) contacts are provided by Glu178, Asp200, and His382.

This sequence belongs to the peptidase M20B family. Zn(2+) is required as a cofactor.

The protein resides in the cytoplasm. It catalyses the reaction Release of the N-terminal residue from a tripeptide.. Functionally, cleaves the N-terminal amino acid of tripeptides. This Streptococcus pyogenes serotype M28 (strain MGAS6180) protein is Peptidase T.